The chain runs to 164 residues: MEMTNAQRLILSNQYKMMTMLDPANAERYRRLQTIIERGYGLQMRELDREFGELKEETCRTIIDIMEMYHALHVSWSNLQDQQSIDERRVTFLGFDAATEARYLGYVRFMVNVEGRYTHFYAGTHGFNAQTPMWEKYQRMLNVWHACPRQYHLSANEINQIINA.

It belongs to the UPF0304 family.

The polypeptide is UPF0304 protein YfbU (Escherichia coli O139:H28 (strain E24377A / ETEC)).